The primary structure comprises 347 residues: Ribosomal RNA large subunit methyltransferase M (347 aa).

Residues Ser-184, 217–220 (APGG), Asp-236, Asp-256, and Asp-272 contribute to the S-adenosyl-L-methionine site. The active-site Proton acceptor is Lys-301.

The protein belongs to the class I-like SAM-binding methyltransferase superfamily. RNA methyltransferase RlmE family. RlmM subfamily. As to quaternary structure, monomer.

It is found in the cytoplasm. The catalysed reaction is cytidine(2498) in 23S rRNA + S-adenosyl-L-methionine = 2'-O-methylcytidine(2498) in 23S rRNA + S-adenosyl-L-homocysteine + H(+). In terms of biological role, catalyzes the 2'-O-methylation at nucleotide C2498 in 23S rRNA. In Xanthomonas euvesicatoria pv. vesicatoria (strain 85-10) (Xanthomonas campestris pv. vesicatoria), this protein is Ribosomal RNA large subunit methyltransferase M.